Reading from the N-terminus, the 510-residue chain is NAD(P)H-quinone oxidoreductase subunit 2 B, chloroplastic (510 aa).

Helical transmembrane passes span 24 to 44 (LLLF…GLIL), 57 to 77 (IPWL…ALLF), 99 to 119 (IFQF…VEYI), 124 to 144 (MAIT…MFLC), 149 to 169 (LITI…LSGY), 183 to 203 (YLLM…WLYG), 227 to 247 (PGIS…LSPA), 295 to 315 (WHLL…LIAI), 323 to 343 (MLAY…IVGD), 347 to 367 (GYAS…GTFA), 395 to 415 (ALSL…AGFF), 418 to 438 (LHLF…IGLL), and 482 to 502 (LSMI…NPII).

Belongs to the complex I subunit 2 family. In terms of assembly, NDH is composed of at least 16 different subunits, 5 of which are encoded in the nucleus.

It localises to the plastid. Its subcellular location is the chloroplast thylakoid membrane. It catalyses the reaction a plastoquinone + NADH + (n+1) H(+)(in) = a plastoquinol + NAD(+) + n H(+)(out). It carries out the reaction a plastoquinone + NADPH + (n+1) H(+)(in) = a plastoquinol + NADP(+) + n H(+)(out). NDH shuttles electrons from NAD(P)H:plastoquinone, via FMN and iron-sulfur (Fe-S) centers, to quinones in the photosynthetic chain and possibly in a chloroplast respiratory chain. The immediate electron acceptor for the enzyme in this species is believed to be plastoquinone. Couples the redox reaction to proton translocation, and thus conserves the redox energy in a proton gradient. This is NAD(P)H-quinone oxidoreductase subunit 2 B, chloroplastic from Cucumis sativus (Cucumber).